A 779-amino-acid chain; its full sequence is DNA topoisomerase 1 (779 aa).

The Toprim domain occupies 1 to 111; it reads MKLVIVESPA…VESDDFFKRV (111 aa). The Mg(2+) site is built by glutamate 7 and aspartate 80. The 437-residue stretch at 132–568 folds into the Topo IA-type catalytic domain; it reads DTNLVNAQQA…FWSGFNNNIE (437 aa). An interaction with DNA region spans residues 166-171; that stretch reads SAGRVQ. Catalysis depends on tyrosine 304, which acts as the O-(5'-phospho-DNA)-tyrosine intermediate. The C4-type zinc finger occupies 600-627; the sequence is CPSCKTGQLSLKLGKFGAFLACSNYPEC.

Belongs to the type IA topoisomerase family. In terms of assembly, monomer. The cofactor is Mg(2+).

It catalyses the reaction ATP-independent breakage of single-stranded DNA, followed by passage and rejoining.. Releases the supercoiling and torsional tension of DNA, which is introduced during the DNA replication and transcription, by transiently cleaving and rejoining one strand of the DNA duplex. Introduces a single-strand break via transesterification at a target site in duplex DNA. The scissile phosphodiester is attacked by the catalytic tyrosine of the enzyme, resulting in the formation of a DNA-(5'-phosphotyrosyl)-enzyme intermediate and the expulsion of a 3'-OH DNA strand. The free DNA strand then undergoes passage around the unbroken strand, thus removing DNA supercoils. Finally, in the religation step, the DNA 3'-OH attacks the covalent intermediate to expel the active-site tyrosine and restore the DNA phosphodiester backbone. This chain is DNA topoisomerase 1, found in Rickettsia typhi (strain ATCC VR-144 / Wilmington).